A 416-amino-acid polypeptide reads, in one-letter code: Putative serine protease HhoB (416 aa).

An N-terminal signal peptide occupies residues 1–25 (MAIHLKASHLGVAVLLLLFGGAIGA). A compositionally biased stretch (polar residues) spans 35 to 53 (GQNHSSPDSPVNTSPQSLT). Residues 35–57 (GQNHSSPDSPVNTSPQSLTPAPV) form a disordered region. In terms of domain architecture, PDZ spans 320–398 (EMTKQLRTSG…PLAIAVKRGQ (79 aa)).

The protein belongs to the peptidase S1C family.

A putative protease, its function overlaps that of the related putative proteases HtrA and HhoA. In Synechocystis sp. (strain ATCC 27184 / PCC 6803 / Kazusa), this protein is Putative serine protease HhoB (hhoB).